Consider the following 95-residue polypeptide: Cell division topological specificity factor (95 aa).

It belongs to the MinE family.

Functionally, prevents the cell division inhibition by proteins MinC and MinD at internal division sites while permitting inhibition at polar sites. This ensures cell division at the proper site by restricting the formation of a division septum at the midpoint of the long axis of the cell. The chain is Cell division topological specificity factor from Methylorubrum extorquens (strain PA1) (Methylobacterium extorquens).